The primary structure comprises 486 residues: MSFRKVVRQSKFRHVFGQPVKNDQCYEDIRVSRVTWDSTFCAVNPKFLAVIVEASGGGAFLVLPLSKTGRIDKAYPTVCGHTGPVLDIEWCPHNDGVIASGSEDCTVMVWQIPEDGLTSPLTEPVVVLEGHTKRVGIVTWHPTARNVLLSAGCDNVVLIWNVGTAEELYRLDSLHPDLIYNVSWNRNGSLFCSACKDKSVRIIDPRRGTLVAEREKAHEGARPMRAIFLADGKVFTTGFSRMSERQLALWDPENLEEPMALQELDSSNGALLPFYDPDTSVVYVCGKGDSSIRYFEITDEPPYIHFLNTFTSKEPQRGVGSMPKRGLEVSKCEIARFYKLHERKCEPIVMTVPRKSDLFQDDLYPDTAGPEAALEAEEWVSGRDAGPVLISLREAYVPSKQRDLKVSRRNVLSDSRPTSAARPAAPAPAAPAPAAAASSSLSGAGEAGKLEEVMRELRALRALVKEQGERIGRLEEQLGRVENGDA.

Ser2 bears the Phosphoserine; by PKC mark. WD repeat units lie at residues 80-120 (GHTG…LTSP), 130-170 (GHTK…ELYR), 174-213 (LHPD…LVAE), 217-260 (AHEG…EPMA), and 265-305 (DSSN…PYIH). A disordered region spans residues 404 to 444 (LKVSRRNVLSDSRPTSAARPAAPAPAAPAPAAAASSSLSGA). A compositionally biased stretch (low complexity) spans 432–444 (APAAAASSSLSGA). Residues 446–484 (EAGKLEEVMRELRALRALVKEQGERIGRLEEQLGRVENG) are a coiled coil.

This sequence belongs to the WD repeat coronin family. In terms of assembly, forms homooligomers, but does not form complexes with the other coronins. Interacts with Arp2/3 complex components, including ACTR2, ARPC1B and ARPC2. Binds actin. Phosphorylated in vivo by PKC in response to cholinergic stimulation. Phosphorylation on Ser-2 regulates the interaction with the Arp2/3 complex and cell motility in fibroblasts. Phosphorylation does not seem to affect subcellular location.

It localises to the cytoplasm. Its subcellular location is the cytoskeleton. The protein resides in the stress fiber. Regulates leading edge dynamics and cell motility in fibroblasts. May be involved in cytokinesis and signal transduction. This chain is Coronin-1B (CORO1B), found in Oryctolagus cuniculus (Rabbit).